The chain runs to 243 residues: tRNA pseudouridine synthase A (243 aa).

Aspartate 53 (nucleophile) is an active-site residue. Tyrosine 111 contacts substrate.

This sequence belongs to the tRNA pseudouridine synthase TruA family. In terms of assembly, homodimer.

It carries out the reaction uridine(38/39/40) in tRNA = pseudouridine(38/39/40) in tRNA. Functionally, formation of pseudouridine at positions 38, 39 and 40 in the anticodon stem and loop of transfer RNAs. The sequence is that of tRNA pseudouridine synthase A from Chlorobium phaeovibrioides (strain DSM 265 / 1930) (Prosthecochloris vibrioformis (strain DSM 265)).